The primary structure comprises 459 residues: Glutathione reductase (459 aa).

7 residues coordinate FAD: Ser-14, Gly-15, Glu-34, Thr-41, Cys-42, Lys-50, and Ala-114. A glutathione-binding site is contributed by Ser-14. Cys-42 and Cys-47 are disulfide-bonded. Positions 177, 180, 197, 203, and 262 each coordinate NADP(+). Residues Asp-313 and Thr-321 each contribute to the FAD site. A glutathione-binding site is contributed by Arg-329. Ala-351 is an NADP(+) binding site. FAD is bound at residue His-448. His-448 acts as the Proton acceptor in catalysis.

The protein belongs to the class-I pyridine nucleotide-disulfide oxidoreductase family. As to quaternary structure, homodimer. FAD is required as a cofactor.

Its subcellular location is the cytoplasm. The enzyme catalyses 2 glutathione + NADP(+) = glutathione disulfide + NADPH + H(+). Functionally, catalyzes the reduction of glutathione disulfide (GSSG) to reduced glutathione (GSH). Constitutes the major mechanism to maintain a high GSH:GSSG ratio in the cytosol. The chain is Glutathione reductase (gor) from Nostoc sp. (strain PCC 7120 / SAG 25.82 / UTEX 2576).